A 327-amino-acid polypeptide reads, in one-letter code: Metapyrocatechase (327 aa).

2 consecutive VOC domains span residues 14–126 (QLAH…IFFE) and 156–276 (RLDH…LFGD). His159, His221, and Glu272 together coordinate Fe cation.

This sequence belongs to the extradiol ring-cleavage dioxygenase family. Requires Fe(2+) as cofactor.

The catalysed reaction is catechol + O2 = (2Z,4E)-2-hydroxy-6-oxohexa-2,4-dienoate + H(+). In Geobacillus stearothermophilus (Bacillus stearothermophilus), this protein is Metapyrocatechase (pheB).